Reading from the N-terminus, the 248-residue chain is 2,3-bisphosphoglycerate-dependent phosphoglycerate mutase (248 aa).

Residues 8–15 (RHGESTWN), 21–22 (TG), R60, 87–90 (ERHY), K98, and 114–115 (RR) each bind substrate. H9 (tele-phosphohistidine intermediate) is an active-site residue. The active-site Proton donor/acceptor is the E87. A disordered region spans residues 117–137 (YDTPPPALEPTDPRASYDDPR). Residues 127–137 (TDPRASYDDPR) show a composition bias toward basic and acidic residues. 183–184 (GN) serves as a coordination point for substrate.

The protein belongs to the phosphoglycerate mutase family. BPG-dependent PGAM subfamily. Homodimer.

The enzyme catalyses (2R)-2-phosphoglycerate = (2R)-3-phosphoglycerate. The protein operates within carbohydrate degradation; glycolysis; pyruvate from D-glyceraldehyde 3-phosphate: step 3/5. Its function is as follows. Catalyzes the interconversion of 2-phosphoglycerate and 3-phosphoglycerate. The chain is 2,3-bisphosphoglycerate-dependent phosphoglycerate mutase from Cupriavidus taiwanensis (strain DSM 17343 / BCRC 17206 / CCUG 44338 / CIP 107171 / LMG 19424 / R1) (Ralstonia taiwanensis (strain LMG 19424)).